Here is an 88-residue protein sequence, read N- to C-terminus: Large ribosomal subunit protein bL27 (88 aa).

Positions 1–21 (MAHKKGVGSSRNGRDSQPKML) are disordered.

It belongs to the bacterial ribosomal protein bL27 family.

This is Large ribosomal subunit protein bL27 from Pelotomaculum thermopropionicum (strain DSM 13744 / JCM 10971 / SI).